The following is a 468-amino-acid chain: Methionine aminopeptidase 2 (468 aa).

A compositionally biased stretch (basic and acidic residues) spans 63-74; sequence AAKEATKKDAKG. The disordered stretch occupies residues 63–87; sequence AAKEATKKDAKGGKGKANGSAAATA. Residue histidine 219 participates in substrate binding. The a divalent metal cation site is built by aspartate 239, aspartate 250, and histidine 319. Histidine 327 contacts substrate. Positions 352 and 449 each coordinate a divalent metal cation.

Belongs to the peptidase M24A family. Methionine aminopeptidase eukaryotic type 2 subfamily. Requires Co(2+) as cofactor. The cofactor is Zn(2+). Mn(2+) serves as cofactor. Fe(2+) is required as a cofactor.

It localises to the cytoplasm. It catalyses the reaction Release of N-terminal amino acids, preferentially methionine, from peptides and arylamides.. With respect to regulation, inhibited by the fumagillin analog, TNP-470. In terms of biological role, cotranslationally removes the N-terminal methionine from nascent proteins. The N-terminal methionine is often cleaved when the second residue in the primary sequence is small and uncharged (Met-Ala-, Cys, Gly, Pro, Ser, Thr, or Val). Required for germ cell proliferation and/or differentiation. In Caenorhabditis elegans, this protein is Methionine aminopeptidase 2.